A 169-amino-acid polypeptide reads, in one-letter code: Glycine-rich RNA-binding protein GRP2A (169 aa).

The 79-residue stretch at 8-86 folds into the RRM domain; the sequence is YRCFVGGLAW…RSITVNEAQS (79 aa). 2 disordered regions span residues 69 to 100 and 125 to 169; these read MNGQ…GGGG and YSGG…GGGW. Positions 89 to 100 are enriched in gly residues; the sequence is SGAGGGGRGGGG.

Predominantly expressed in meristematic and growing tissue.

It is found in the nucleus. Its function is as follows. May play a general role in circadian phenomena associated with meristematic tissue. In Sinapis alba (White mustard), this protein is Glycine-rich RNA-binding protein GRP2A.